A 1173-amino-acid polypeptide reads, in one-letter code: WASH complex subunit 4 (1173 aa).

An N-acetylalanine modification is found at A2. Phosphoserine is present on S7. Residues 27-56 (QLKNYGRFLEEYTSQLRRIEDALDDLIGDV) are a coiled coil. Residues 705–1173 (KDLALFFSLN…STVSADPVVK (469 aa)) are sufficient for interaction with WASHC5. Residues 1141-1155 (AEENQEKKEKEEETK) are compositionally biased toward basic and acidic residues. Positions 1141–1173 (AEENQEKKEKEEETKTSNGDGPESTVSADPVVK) are disordered. T1154 bears the Phosphothreonine mark.

Belongs to the SWIP family. Component of the WASH core complex also described as WASH regulatory complex (SHRC) composed of WASH (WASHC1, WASH2P or WASH3P), WASHC2 (WASHC2A or WASHC2C), WASHC3, WASHC4 and WASHC5. The WASH core complex associates via WASHC2 with the F-actin-capping protein dimer (formed by CAPZA1, CAPZA2 or CAPZA3 and CAPZB) in a transient or substoichiometric manner which was initially described as WASH complex.

The protein resides in the early endosome. Acts as a component of the WASH core complex that functions as a nucleation-promoting factor (NPF) at the surface of endosomes, where it recruits and activates the Arp2/3 complex to induce actin polymerization, playing a key role in the fission of tubules that serve as transport intermediates during endosome sorting. The protein is WASH complex subunit 4 of Mus musculus (Mouse).